The sequence spans 305 residues: Ribosomal RNA small subunit methyltransferase H (305 aa).

S-adenosyl-L-methionine is bound by residues G47 to H49, D66, F93, D108, and Q115. The disordered stretch occupies residues A280–S305. Basic residues predominate over residues R290–S305.

It belongs to the methyltransferase superfamily. RsmH family.

The protein localises to the cytoplasm. The catalysed reaction is cytidine(1402) in 16S rRNA + S-adenosyl-L-methionine = N(4)-methylcytidine(1402) in 16S rRNA + S-adenosyl-L-homocysteine + H(+). Functionally, specifically methylates the N4 position of cytidine in position 1402 (C1402) of 16S rRNA. The sequence is that of Ribosomal RNA small subunit methyltransferase H from Synechococcus sp. (strain WH7803).